The chain runs to 123 residues: MALKIRLARGGSKKRPYYHVVLADARSPRDGRFLENLGSWNPMLAKDDEKRVQLNAERIKHWIEHGAQPTDRVLRFLDEAGVAKREVKNNPVKAKPGKRAQERAAEKAQKVADAAAAAADAAE.

The segment at 87–123 (VKNNPVKAKPGKRAQERAAEKAQKVADAAAAAADAAE) is disordered. Over residues 99-110 (RAQERAAEKAQK) the composition is skewed to basic and acidic residues. A compositionally biased stretch (low complexity) spans 111 to 123 (VADAAAAAADAAE).

This sequence belongs to the bacterial ribosomal protein bS16 family.

This chain is Small ribosomal subunit protein bS16, found in Rhizobium johnstonii (strain DSM 114642 / LMG 32736 / 3841) (Rhizobium leguminosarum bv. viciae).